A 718-amino-acid polypeptide reads, in one-letter code: Probable trehalose-phosphatase (718 aa).

Residues 449-470 (LSMDQTGHKKVDAKKKPGIRKK) are disordered. Residues 459–470 (VDAKKKPGIRKK) are compositionally biased toward basic residues.

It in the N-terminal section; belongs to the glycosyltransferase 20 family. The protein in the C-terminal section; belongs to the trehalose phosphatase family.

It carries out the reaction alpha,alpha-trehalose 6-phosphate + H2O = alpha,alpha-trehalose + phosphate. This Encephalitozoon cuniculi (strain GB-M1) (Microsporidian parasite) protein is Probable trehalose-phosphatase.